Consider the following 694-residue polypeptide: Pentatricopeptide repeat-containing protein At3g12770 (694 aa).

PPR repeat units lie at residues 52–82 (SGFL…LPRP), 83–117 (QIFP…RVSP), 118–152 (DSFT…GFDA), 153–183 (DVFV…LPLP), 186–220 (TIVS…DVKP), 221–255 (DWVA…GLEI), 256–286 (EPDL…MKSP), 287–321 (NLIL…DVRP), 322–356 (DTIS…DYRD), 357–387 (DVFI…TLDR), 388–422 (DVVV…GVHP), 423–457 (NDVT…KINP), and 458–488 (QQQH…MPVQ). Residues 493–568 (VWGALLSACK…DVGCSWVEVR (76 aa)) are type E motif. The segment at 569-599 (GRLEAFRVGDKSHPRYEEIERQVEWIESRLK) is type E(+) motif. A type DYW motif region spans residues 600 to 694 (EGGFVANKDA…DGVCSCGDYW (95 aa)).

It belongs to the PPR family. PCMP-H subfamily.

The polypeptide is Pentatricopeptide repeat-containing protein At3g12770 (PCMP-H43) (Arabidopsis thaliana (Mouse-ear cress)).